The following is a 476-amino-acid chain: Probable periplasmic serine endoprotease DegP-like (476 aa).

A signal peptide spans 1 to 27 (MSIPRLKSYFTILATVLVLGQAVSAQA). Catalysis depends on charge relay system residues histidine 116, aspartate 146, and serine 219. Residues 217-219 (GNS) and 274-278 (LGVVI) contribute to the substrate site. 2 consecutive PDZ domains span residues 263 to 354 (LKTG…IRDG) and 360 to 465 (ELTV…LRQG).

It belongs to the peptidase S1C family.

Its subcellular location is the periplasm. It carries out the reaction Acts on substrates that are at least partially unfolded. The cleavage site P1 residue is normally between a pair of hydrophobic residues, such as Val-|-Val.. In terms of biological role, might be efficient in the degradation of transiently denatured and unfolded proteins which accumulate in the periplasm following stress conditions. The polypeptide is Probable periplasmic serine endoprotease DegP-like (mucD) (Pseudomonas fluorescens (strain ATCC BAA-477 / NRRL B-23932 / Pf-5)).